The chain runs to 164 residues: Protein SprT (164 aa).

Positions 14-156 constitute a SprT-like domain; sequence QQAETFFKRP…LCKRCRAILV (143 aa). Residue H69 participates in Zn(2+) binding. The active site involves E70. Position 73 (H73) interacts with Zn(2+).

Belongs to the SprT family. Zn(2+) serves as cofactor.

It is found in the cytoplasm. This chain is Protein SprT, found in Pseudomonas putida (strain GB-1).